The chain runs to 109 residues: Putative double-stranded DNA mimic protein plu2488 (109 aa).

The protein belongs to the putative dsDNA mimic protein family.

Functionally, may act as a double-stranded DNA (dsDNA) mimic. Probably regulates the activity of a dsDNA-binding protein. The polypeptide is Putative double-stranded DNA mimic protein plu2488 (Photorhabdus laumondii subsp. laumondii (strain DSM 15139 / CIP 105565 / TT01) (Photorhabdus luminescens subsp. laumondii)).